The sequence spans 233 residues: Small ribosomal subunit protein uS3 (233 aa).

Positions 39–108 (IRTALFKLLK…KLIVNVRVIE (70 aa)) constitute a KH type-2 domain.

The protein belongs to the universal ribosomal protein uS3 family. As to quaternary structure, part of the 30S ribosomal subunit. Forms a tight complex with proteins S10 and S14.

Binds the lower part of the 30S subunit head. Binds mRNA in the 70S ribosome, positioning it for translation. In Mycoplasma mycoides subsp. mycoides SC (strain CCUG 32753 / NCTC 10114 / PG1), this protein is Small ribosomal subunit protein uS3.